Consider the following 438-residue polypeptide: Exodeoxyribonuclease 7 large subunit (438 aa).

The segment at 406-438 is disordered; sequence ATSTGPTDDIPSSAARLPASPAPDARPASGPES.

The protein belongs to the XseA family. As to quaternary structure, heterooligomer composed of large and small subunits.

It localises to the cytoplasm. It catalyses the reaction Exonucleolytic cleavage in either 5'- to 3'- or 3'- to 5'-direction to yield nucleoside 5'-phosphates.. In terms of biological role, bidirectionally degrades single-stranded DNA into large acid-insoluble oligonucleotides, which are then degraded further into small acid-soluble oligonucleotides. The chain is Exodeoxyribonuclease 7 large subunit from Clavibacter sepedonicus (Clavibacter michiganensis subsp. sepedonicus).